Here is a 283-residue protein sequence, read N- to C-terminus: Probable endonuclease 4 (283 aa).

Zn(2+) is bound by residues His69, His109, Glu145, Asp179, His182, His216, Asp229, His231, and Glu261.

The protein belongs to the AP endonuclease 2 family. Zn(2+) is required as a cofactor.

The catalysed reaction is Endonucleolytic cleavage to 5'-phosphooligonucleotide end-products.. In terms of biological role, endonuclease IV plays a role in DNA repair. It cleaves phosphodiester bonds at apurinic or apyrimidinic (AP) sites, generating a 3'-hydroxyl group and a 5'-terminal sugar phosphate. The chain is Probable endonuclease 4 from Campylobacter concisus (strain 13826).